Consider the following 1816-residue polypeptide: Kinesin-like protein KIF1B (1816 aa).

Position 2 is an N-acetylserine (Ser-2). The region spanning 5–354 is the Kinesin motor domain; it reads SVKVAVRVRP…LRYADRAKQI (350 aa). 97-104 serves as a coordination point for ATP; it reads GQTGAGKS. Residues 270–350 are interaction with KIFBP; sequence NINKSLTTLG…TLSTLRYADR (81 aa). Positions 365–386 form a coiled coil; that stretch reads NAKLVRELKEEVTRLKDLLRAQ. Residues 431-450 form a disordered region; it reads FSTASMGSLTSSPSSCSLSS. Over residues 432–450 the composition is skewed to low complexity; it reads STASMGSLTSSPSSCSLSS. Positions 470–502 form a coiled coil; that stretch reads GEEAIERLKESEKIIAELNETWEEKLRKTEAIR. Residues 556–612 form the FHA domain; that stretch reads TRVGQADAERRQDIVLSGAHIKEEHCIFRSERSNSGEVIVTLEPCERSETYVNGKRV. 2 positions are modified to phosphothreonine: Thr-647 and Thr-652. Phosphoserine is present on residues Gln-663 and Glu-665. Coiled-coil stretches lie at residues 668 to 737 and 841 to 869; these read EKQG…EEEV and SLEK…AQDE. Phosphoserine occurs at positions 1054 and 1057. Position 1075 is a phosphothreonine (Thr-1075). Asn-1141, Ser-1416, Ser-1454, and Ser-1487 each carry phosphoserine. The interval 1550-1570 is disordered; it reads STTTFESAITPSESSGYDSGD. The segment covering 1554-1566 has biased composition (polar residues); sequence FESAITPSESSGY. 4 positions are modified to phosphoserine: Ser-1573, Ser-1603, Ser-1610, and Ser-1613. Residues 1617-1660 are disordered; sequence RDPSESSFSSATLTPSSTCPSLVDSRSNSLDQKTPEANSRASSP. Positions 1621-1634 are enriched in low complexity; sequence ESSFSSATLTPSST. Residues 1640-1658 show a composition bias toward polar residues; it reads DSRSNSLDQKTPEANSRAS. In terms of domain architecture, PH spans 1702-1799; that stretch reads VSKKGYLHFK…WLYAFNPLLA (98 aa).

The protein belongs to the TRAFAC class myosin-kinesin ATPase superfamily. Kinesin family. Unc-104 subfamily. In terms of assembly, monomer. Interacts with KIFBP; positively regulates KIF1B microtubule motor activity. Interacts (via C-terminus end of the kinesin-motor domain) with CHP1; the interaction occurs in a calcium-dependent manner. Interacts with MADD (via death domain); links this isoform to Rab3-carrying vesicles in anterograde synaptic vesicle transport. As to expression, isoform 3 is abundant in the skeletal muscle. It is also expressed in fetal brain, lung and kidney, and adult heart, placenta, testis, ovary and small intestine. Isoform 2 is abundant in the brain and also expressed in fetal heart, lung, liver and kidney, and adult skeletal muscle, placenta, liver, kidney, heart, spleen, thymus, prostate, testis, ovary, small intestine, colon and pancreas.

Its subcellular location is the cytoplasm. The protein localises to the cytoskeleton. It is found in the cytoplasmic vesicle. It localises to the secretory vesicle. The protein resides in the synaptic vesicle membrane. Its subcellular location is the mitochondrion. The catalysed reaction is ATP + H2O + a kinesin associated with a microtubule at position (n) = ADP + phosphate a kinesin associated with a microtubule at position (n+1, toward the plus end).. Its function is as follows. Has a plus-end-directed microtubule motor activity and functions as a motor for transport of vesicles and organelles along microtubules. Functionally, has a plus-end-directed microtubule motor activity and functions as a motor for anterograde synaptic vesicle transport along axonal microtubules from the cell body to the presynapse in neuronal cells. Functions as a downstream effector in a developmental apoptotic pathway that is activated when nerve growth factor (NGF) becomes limiting for neuronal progenitor cells. In terms of biological role, has a plus-end-directed microtubule motor activity and functions as a motor for anterograde transport of mitochondria. This chain is Kinesin-like protein KIF1B, found in Homo sapiens (Human).